Reading from the N-terminus, the 410-residue chain is Lissencephaly-1 homolog (410 aa).

Residues 7–39 (QQEELQLAVHAYLVEAGHAEAAAAMAKSANLGD) form the LisH domain. The stretch at 55–80 (TTITRLQKRNMELQAEVEELRSSARA) forms a coiled coil. 7 WD repeats span residues 104–143 (GHRL…FERS), 146–185 (GHTN…CTKT), 188–227 (GHDH…CLQT), 230–269 (GHSD…CKHV), 294–333 (MIFG…HLAR), 336–375 (GHDN…VSKT), and 378–410 (AHNH…WECN).

This sequence belongs to the WD repeat LIS1/nudF family.

The protein localises to the cytoplasm. It is found in the cytoskeleton. Its subcellular location is the microtubule organizing center. The protein resides in the centrosome. In terms of biological role, positively regulates the activity of the minus-end directed microtubule motor protein dynein. May enhance dynein-mediated microtubule sliding by targeting dynein to the microtubule plus end. Required for several dynein- and microtubule-dependent processes. The polypeptide is Lissencephaly-1 homolog (Monosiga brevicollis (Choanoflagellate)).